Reading from the N-terminus, the 2055-residue chain is MASKGGKSKPDIVMASKSGKSKPDNESRAKRQKTLEAPKEPRRPKTHWDHVLEEMAWLSKDFESERKWKLAQAKKVALRASKGMLDQASREERKLKEEEQRLRKVALNISKDMKKFWMKVEKLVLYKHQLVRNEKKKKAMDKQLEFLLGQTERYSTMLAENLVEPYKQGQNTPSKPLLTIESKSDEERAEQIPPEINSSAGLESGSPELDEDYDLKSEDETEDDEDTIEEDEKHFTKRERQEELEALQNEVDLPVEELLRRYTSGRVSRETSPVKDENEDNLTSVSRVTSPVKDENQDNLASVGQDHGEDKNNLAASEETEGNPSVRRSNDSYGHLAISETHSHDLEPGMTTASVKSRKEDHTYDFNDEQEDVDFVLANGEEKDDEATLAVEEELAKADNEDHVEEIALLQKESEMPIEVLLARYKEDFGGKDISEDESESSFAVSEDSIVDSDENRQQADLDDDNVDLTECKLDPEPCSENVEGTFHEVAEDNDKDSSDKIADAAAAARSAQPTGFTYSTTKVRTKLPFLLKHSLREYQHIGLDWLVTMYEKKLNGILADEMGLGKTIMTIALLAHLACDKGIWGPHLIVVPTSVMLNWETEFLKWCPAFKILTYFGSAKERKLKRQGWMKLNSFHVCITTYRLVIQDSKMFKRKKWKYLILDEAHLIKNWKSQRWQTLLNFNSKRRILLTGTPLQNDLMELWSLMHFLMPHVFQSHQEFKDWFCNPIAGMVEGQEKINKEVIDRLHNVLRPFLLRRLKRDVEKQLPSKHEHVIFCRLSKRQRNLYEDFIASTETQATLTSGSFFGMISIIMQLRKVCNHPDLFEGRPIVSSFDMAGIDVQLSSTICSLLLESPFSKVDLEALGFLFTHLDFSMTSWEGDEIKAISTPSELIKQRVNLKDDLEAIPLSPKNRKNLQGTNIFEEIRKAVFEERIQESKDRAAAIAWWNSLRCQRKPTYSTSLRTLLTIKGPLDDLKANCSSYMYSSILADIVLSPIERFQKMIELVEAFTFAIPAARVPSPTCWCSKSDSPVFLSPSYKEKVTDLLSPLLSPIRPAIVRRQVYFPDRRLIQFDCGKLQELAMLLRKLKFGGHRALIFTQMTKMLDVLEAFINLYGYTYMRLDGSTPPEERQTLMQRFNTNPKIFLFILSTRSGGVGINLVGADTVIFYDSDWNPAMDQQAQDRCHRIGQTREVHIYRLISESTIEENILKKANQKRVLDNLVIQNGEYNTEFFKKLDPMELFSGHKALTTKDEKETSKHCGADIPLSNADVEAALKQAEDEADYMALKRVEQEEAVDNQEFTEEPVERPEDDELVNEDDIKADEPADQGLVAAGPAKEEMSLLHSDIRDERAVITTSSQEDDTDVLDDVKQMAAAAADAGQAISSFENQLRPIDRYAIRFLELWDPIIVEAAMENEAGFEEKEWELDHIEKYKEEMEAEIDDGEEPLVYEKWDADFATEAYRQQVEVLAQHQLMEDLENEAREREAAEVAEMVLTQNESAHVLKPKKKKKAKKAKYKSLKKGSLAAESKHVKSVVKIEDSTDDDNEEFGYVSSSDSDMVTPLSRMHMKGKKRDLIVDTDEEKTSKKKAKKHKKSLPNSDIKYKQTSALLDELEPSKPSDSMVVDNELKLTNRGKTVGKKFITSMPIKRVLMIKPEKLKKGNLWSRDCVPSPDSWLPQEDAILCAMVHEYGPNWNFVSGTLYGMTAGGAYRGRYRHPAYCCERYRELIQRHILSASDSAVNEKNLNTGSGKALLKVTEENIRTLLNVAAEQPDTEMLLQKHFSCLLSSIWRTSTRTGNDQMLSLNSPIFNRQFMGSVNHTQDLARKPWQGMKVTSLSRKLLESALQDSGPSQPDNTISRSRLQETQPINKLGLELTLEFPRGNDDSLNQFPPMISLSIDGSDSLNYVNEPPGEDVLKGSRVAAENRYRNAANACIEDSFGWASNTFPANDLKSRTGTKAQSLGKHKLSASDSAKSTKSKHRKLLAEQLEGAWVRPNDPNLKFDFTPGDREEEEEQEVDEKANSAEIEMISCSQWYDPFFTSGLDDCSLASDISEIE.

The interval 1-47 is disordered; the sequence is MASKGGKSKPDIVMASKSGKSKPDNESRAKRQKTLEAPKEPRRPKTH. The span at 21–47 shows a compositional bias: basic and acidic residues; sequence SKPDNESRAKRQKTLEAPKEPRRPKTH. Residues 29–36 carry the Nuclear localization signal 1 motif; sequence AKRQKTLE. Residues 35-107 enclose the HSA domain; that stretch reads LEAPKEPRRP…EEQRLRKVAL (73 aa). Coiled-coil stretches lie at residues 78–147 and 229–250; these read LRAS…LEFL and EEDEKHFTKRERQEELEALQNE. Disordered stretches follow at residues 183–332 and 340–359; these read KSDE…SNDS and ETHSHDLEPGMTTASVKSRK. A compositionally biased stretch (acidic residues) spans 208–230; sequence ELDEDYDLKSEDETEDDEDTIEE. 2 stretches are compositionally biased toward basic and acidic residues: residues 231–243 and 267–276; these read DEKHFTKRERQEE and VSRETSPVKD. The stretch at 392 to 416 forms a coiled coil; it reads EEELAKADNEDHVEEIALLQKESEM. A disordered region spans residues 432–461; sequence KDISEDESESSFAVSEDSIVDSDENRQQAD. Residues 548 to 713 enclose the Helicase ATP-binding domain; the sequence is VTMYEKKLNG…WSLMHFLMPH (166 aa). Residue 561 to 568 coordinates ATP; that stretch reads DEMGLGKT. A DEAH box motif is present at residues 664–667; sequence DEAH. Residues 1076–1229 enclose the Helicase C-terminal domain; that stretch reads KLQELAMLLR…NLVIQNGEYN (154 aa). The tract at residues 1293–1313 is disordered; the sequence is EEAVDNQEFTEEPVERPEDDE. A coiled-coil region spans residues 1419 to 1492; sequence FEEKEWELDH…EREAAEVAEM (74 aa). 2 short sequence motifs (nuclear localization signal) span residues 1506–1513 and 1570–1577; these read KKKKKAKK and KKRDLIVD. The interval 1577–1597 is disordered; it reads DTDEEKTSKKKAKKHKKSLPN. The segment covering 1584 to 1594 has biased composition (basic residues); sequence SKKKAKKHKKS. Residues 1673–1727 form the Myb-like domain; it reads SWLPQEDAILCAMVHEYGPNWNFVSGTLYGMTAGGAYRGRYRHPAYCCERYRELI. 2 disordered regions span residues 1843 to 1864 and 1951 to 1977; these read ALQDSGPSQPDNTISRSRLQET and KSRTGTKAQSLGKHKLSASDSAKSTKS. Residues 1844 to 1864 are compositionally biased toward polar residues; that stretch reads LQDSGPSQPDNTISRSRLQET. Residues 2006 to 2029 are a coiled coil; that stretch reads GDREEEEEQEVDEKANSAEIEMIS.

This sequence belongs to the SNF2/RAD54 helicase family. SWR1 subfamily. Component of the SWR1 chromatin-remodeling complex composed of at least ARP6/ESD1/SUF3, PIE1, SWC6, SWC2 and H2AZs (HTA8, HTA9, HTA11). Interacts (via c-terminus) with SWC6 and ARP6 and (via N-terminus) with H2AZs. In terms of tissue distribution, expressed in ovules, but not in stamens.

The protein localises to the nucleus. It carries out the reaction ATP + H2O = ADP + phosphate + H(+). Component of the SWR1 complex which mediates the ATP-dependent exchange of histone H2A for the H2A variant H2A.F/Z leading to transcriptional regulation of selected genes (e.g. FLC) by chromatin remodeling. Probable DNA-dependent ATPase. Not involved in the repression of FLC in gametophytes, but required for the reactivation of FLC in early embryos and for the maintenance of full activation of FLC in late embryos. This is Protein PHOTOPERIOD-INDEPENDENT EARLY FLOWERING 1 (PIE1) from Arabidopsis thaliana (Mouse-ear cress).